We begin with the raw amino-acid sequence, 60 residues long: Potassium channel toxin alpha-KTx 29.3 (60 aa).

A signal peptide spans 1–28 (MKSVCGVLIILVVLTTMLSISTFSTVGA). 3 disulfides stabilise this stretch: cysteine 32-cysteine 51, cysteine 40-cysteine 56, and cysteine 44-cysteine 58.

Belongs to the short scorpion toxin superfamily. Potassium channel inhibitor family. Alpha-KTx 29 subfamily. As to expression, expressed by the venom gland.

The protein resides in the secreted. Functionally, weakly inhibits the Kv1.3/KCNA3 channel (1 uM of thetoxin inhibits currents by 13.2%) and Kv7.1/KCNQ1 channel (10 uM of the toxin inhibits currents by 27.7%). The sequence is that of Potassium channel toxin alpha-KTx 29.3 from Lychas mucronatus (Chinese swimming scorpion).